We begin with the raw amino-acid sequence, 388 residues long: Alanine racemase, catabolic (388 aa).

Lysine 46 (proton acceptor; specific for D-alanine) is an active-site residue. N6-(pyridoxal phosphate)lysine is present on lysine 46. Substrate is bound at residue arginine 145. The active-site Proton acceptor; specific for L-alanine is the tyrosine 267. Methionine 315 provides a ligand contact to substrate.

Belongs to the alanine racemase family. It depends on pyridoxal 5'-phosphate as a cofactor.

The catalysed reaction is L-alanine = D-alanine. In terms of biological role, isomerizes L-alanine to D-alanine which is then oxidized to pyruvate by DadA. This Agrobacterium fabrum (strain C58 / ATCC 33970) (Agrobacterium tumefaciens (strain C58)) protein is Alanine racemase, catabolic (dadB).